The following is a 1187-amino-acid chain: RNA helicase Mov10l1 (1187 aa).

The interval 273–347 (RSKSCPGAAA…EPEPGGLIPP (75 aa)) is disordered. 2 stretches are compositionally biased toward basic and acidic residues: residues 296–307 (HHREDKTDEIPE) and 322–339 (ACKEESREKGNTPEKQEP). Repeat copies occupy residues 642–652 (TRNDSQSITNI), 653–663 (IRNDGQSITNV), 664–674 (TRNDGQPITKV), 675–685 (TRNNSQSITNI), and 686–696 (TRNDGQPITKN). The tract at residues 642–696 (TRNDSQSITNIIRNDGQSITNVTRNDGQPITKVTRNNSQSITNITRNDGQPITKN) is 5 X 11 AA tandem repeats of [TI]-R-N-[DN]-[GS]-Q-[SP]-I-T-[NK]-[IVN]. The interval 686–727 (TRNDGQPITKNKKTVKDQTKHTTEERHVGTTDQPEKASSTAE) is disordered. The span at 699 to 720 (TVKDQTKHTTEERHVGTTDQPE) shows a compositional bias: basic and acidic residues. Residue 772–779 (GPPGTGKT) participates in ATP binding. Residues 888–891 (DEAG) carry the DEAG box motif.

This sequence belongs to the DNA2/NAM7 helicase family. SDE3 subfamily. As to quaternary structure, interacts with PIWIL1. Interacts with PIWIL2. Interacts with PIWIL4. Interacts with HSPA2. Interacts with PLD6. As to expression, isoform 1: Specifically expressed in testis. Isoform 1: In testis, present in pachytene spermatocytes but absent in postmeiotic spermatids (at protein level). Isoform 2: Present in cardiomyocytes (at protein level). Isoform 2: Heart specific. Isoform 3: Heart specific and is specifically expressed in cardiac myocytes.

Its subcellular location is the cytoplasm. It carries out the reaction ATP + H2O = ADP + phosphate + H(+). ATP-dependent RNA helicase required during spermatogenesis to repress transposable elements and prevent their mobilization, which is essential for germline integrity. Acts via the piRNA metabolic process, which mediates the repression of transposable elements during meiosis by forming complexes composed of piRNAs and Piwi proteins and governs the methylation and subsequent repression of transposons. Involved in the primary piRNA metabolic process. Specifically binds to piRNA precursors and promotes the generation of intermediate piRNA processing fragments that are subsequently loaded to Piwi proteins. Acts via its ATP-dependent RNA helicase activity: displays 5'-3' RNA unwinding activity and probably mediates unwinding and funneling of single-stranded piRNA precursor transcripts to the endonuclease that catalyzes the first cleavage step of piRNA processing to generate piRNA intermediate fragments that are subsequently loaded to Piwi proteins. Functionally, may act downstream of MEF2C during heart formation. Acts as a cardiac-specific suppressor of cardiomyocyte hypertrophy and cell cycle progression, suggesting that it may suppress these processes through the regulation of CDKN1A. Such results however require additional evidence. The sequence is that of RNA helicase Mov10l1 from Mus musculus (Mouse).